Here is a 342-residue protein sequence, read N- to C-terminus: tRNA N6-adenosine threonylcarbamoyltransferase (342 aa).

Fe cation is bound by residues H114 and H118. Residues 136–140, D169, G182, D186, and N275 each bind substrate; that span reads LVSGG. Residue D301 participates in Fe cation binding.

Belongs to the KAE1 / TsaD family. It depends on Fe(2+) as a cofactor.

It is found in the cytoplasm. It catalyses the reaction L-threonylcarbamoyladenylate + adenosine(37) in tRNA = N(6)-L-threonylcarbamoyladenosine(37) in tRNA + AMP + H(+). Its function is as follows. Required for the formation of a threonylcarbamoyl group on adenosine at position 37 (t(6)A37) in tRNAs that read codons beginning with adenine. Is involved in the transfer of the threonylcarbamoyl moiety of threonylcarbamoyl-AMP (TC-AMP) to the N6 group of A37, together with TsaE and TsaB. TsaD likely plays a direct catalytic role in this reaction. The polypeptide is tRNA N6-adenosine threonylcarbamoyltransferase (Streptococcus pyogenes serotype M4 (strain MGAS10750)).